The following is a 434-amino-acid chain: Na(+)/H(+) antiporter NhaA 1 (434 aa).

Helical transmembrane passes span 34 to 54 (GLLL…PWSA), 73 to 93 (LTLG…VAGL), 111 to 131 (ALPV…YVLW), 141 to 161 (GWAI…AVIS), 171 to 191 (FLLT…ALFY), 194 to 214 (ELHL…ALLV), 233 to 253 (VLVH…GFAV), 278 to 298 (SAGL…VGGF), 313 to 333 (VVTG…WLLA), 346 to 366 (WVDV…SLLI), and 380 to 400 (HVKV…TGVL).

This sequence belongs to the NhaA Na(+)/H(+) (TC 2.A.33) antiporter family.

Its subcellular location is the cell membrane. The catalysed reaction is Na(+)(in) + 2 H(+)(out) = Na(+)(out) + 2 H(+)(in). In terms of biological role, na(+)/H(+) antiporter that extrudes sodium in exchange for external protons. The sequence is that of Na(+)/H(+) antiporter NhaA 1 from Nocardioides sp. (strain ATCC BAA-499 / JS614).